A 466-amino-acid chain; its full sequence is UDP-N-acetylmuramoylalanine--D-glutamate ligase (466 aa).

Residue 127–133 coordinates ATP; the sequence is GSNGKST.

It belongs to the MurCDEF family.

It localises to the cytoplasm. It catalyses the reaction UDP-N-acetyl-alpha-D-muramoyl-L-alanine + D-glutamate + ATP = UDP-N-acetyl-alpha-D-muramoyl-L-alanyl-D-glutamate + ADP + phosphate + H(+). The protein operates within cell wall biogenesis; peptidoglycan biosynthesis. In terms of biological role, cell wall formation. Catalyzes the addition of glutamate to the nucleotide precursor UDP-N-acetylmuramoyl-L-alanine (UMA). In Ruegeria pomeroyi (strain ATCC 700808 / DSM 15171 / DSS-3) (Silicibacter pomeroyi), this protein is UDP-N-acetylmuramoylalanine--D-glutamate ligase.